The chain runs to 543 residues: MAKRIIYNENARRALEKGIDILAEAVAVTLGPKGRNVVLEKKFGAPQIINDGVTIAKEIELEDHIENTGVALIRQAASKTNDAAGDGTTTATVLAHAMVKAGLRNVAAGANAITLKKGIDKASDFLVGKIQENAKPIADSNAIAQVGTISAGNDEEVGKMIADAMDKVGKEGVISLEEGKSMETELEVTEGMRFDKGYISPYFATDTERMEAVLDEPYILLTDKKIGLVQDLVPVLEQIARTGKPLLIIAEDIEKEALATLVVNRLRGVLNVAAVKAPGFGDRRKAMIEDMAVLTNGQLITEDQGLKLENAKLEMLGTARRVTINKDTTTIVAEGNEVAVSTRCEQIKKQMDETDSTYDKEKLQERLAKLAGGVAVVKVGAATETEMKDKKLRLEDAINATKAAVEEGIVPGGGTTLAHMAPALEEWAASNLSGEELIGANIVASALTAPLMRIAENAGVNGAVVAENVKSKSFNEGYNAANGEYVDMLSAGIVDPAKVTRSGLQNAASIAGMVLTTECIVADMPEKKEAAAAGGGMGGDFDY.

Residues 29–32 (TLGP), 86–90 (DGTTT), Gly413, 479–481 (NAA), and Asp495 each bind ATP.

It belongs to the chaperonin (HSP60) family. As to quaternary structure, forms a cylinder of 14 subunits composed of two heptameric rings stacked back-to-back. Interacts with the co-chaperonin GroES.

The protein localises to the cytoplasm. It catalyses the reaction ATP + H2O + a folded polypeptide = ADP + phosphate + an unfolded polypeptide.. Together with its co-chaperonin GroES, plays an essential role in assisting protein folding. The GroEL-GroES system forms a nano-cage that allows encapsulation of the non-native substrate proteins and provides a physical environment optimized to promote and accelerate protein folding. This Synechococcus sp. (strain CC9311) protein is Chaperonin GroEL 2.